Here is a 468-residue protein sequence, read N- to C-terminus: Mitochondrial adenyl nucleotide antiporter SLC25A23 (468 aa).

Positions 1-149 (MRGSPGDAER…DHFLLHSLEN (149 aa)) are regulatory N-terminal domain. Over 1–188 (MRGSPGDAER…EKLTGMWWKQ (188 aa)) the chain is Mitochondrial intermembrane. An EF-hand 1 domain is found at 9–44 (ERRQRWGRLFEELDSNKDGRVDVHELRQGLARLGGG). 5 residues coordinate Ca(2+): D22, N24, D26, R28, and E33. The tract at residues 34–67 (LRQGLARLGGGNPDPGAQQGISSEGDADPDGGLD) is disordered. Over residues 58 to 67 (GDADPDGGLD) the composition is skewed to acidic residues. EF-hand domains follow at residues 77–112 (EREQ…LGIS) and 113–148 (ISLE…HSLE). The Ca(2+) site is built by D90, N92, D94, H96, and E101. Positions 150-159 (VEDVLYFWKH) are linker region. A C-terminal transmembrane transporter domain region spans residues 165–468 (IGECLTVPDE…MKQALGVTSR (304 aa)). Solcar repeat units follow at residues 183 to 269 (GMWW…IKRA), 277 to 362 (LHVQ…LKNW), and 374 to 462 (PGIL…MKQA). The chain crosses the membrane as a helical span at residues 189-206 (LVAGAVAGAVSRTGTAPL). Residues 207–243 (DRLKVFMQVHASKTNRLNILGGLRSMVLEGGIRSLWR) lie on the Mitochondrial matrix side of the membrane. A helical transmembrane segment spans residues 244-263 (GNGINVLKIAPESAIKFMAY). The Mitochondrial intermembrane portion of the chain corresponds to 264–286 (EQIKRAILGQQETLHVQERFVAG). Residues 287 to 300 (SLAGATAQTIIYPM) form a helical membrane-spanning segment. Over 301-336 (EVLKTRLTLRRTGQYKGLLDCARRILEREGPRAFYR) the chain is Mitochondrial matrix. The chain crosses the membrane as a helical span at residues 337–356 (GYLPNVLGIIPYAGIDLAVY). Topologically, residues 357–379 (ETLKNWWLQQYSHDSADPGILVL) are mitochondrial intermembrane. A helical membrane pass occupies residues 380–397 (LACGTISSTCGQIASYPL). The Mitochondrial matrix segment spans residues 398–436 (ALVRTRMQAQASIEGGPQLSMLGLLRHILSQEGMRGLYR). Residues 437–456 (GIAPNFMKVIPAVSISYVVY) form a helical membrane-spanning segment. The Mitochondrial intermembrane portion of the chain corresponds to 457 to 468 (ENMKQALGVTSR).

This sequence belongs to the mitochondrial carrier (TC 2.A.29) family. In terms of assembly, interacts with MCU. Interacts with MICU1. Expressed at low levels in most tissues examined, with highest expression in brain, skeletal muscle and pancreas.

The protein resides in the mitochondrion inner membrane. The catalysed reaction is Mg(2+)(out) + phosphate(in) + ATP(out) = Mg(2+)(in) + phosphate(out) + ATP(in). It carries out the reaction ADP(out) + phosphate(in) + H(+)(out) = ADP(in) + phosphate(out) + H(+)(in). The enzyme catalyses AMP(out) + phosphate(in) = AMP(in) + phosphate(out). It catalyses the reaction phosphate(in) + ATP(out) + 2 H(+)(out) = phosphate(out) + ATP(in) + 2 H(+)(in). The catalysed reaction is dADP(in) + ADP(out) = dADP(out) + ADP(in). It carries out the reaction Mg(2+)(in) + ADP(out) + ATP(in) + H(+)(out) = Mg(2+)(out) + ADP(in) + ATP(out) + H(+)(in). The enzyme catalyses ADP(out) + diphosphate(in) = ADP(in) + diphosphate(out). It catalyses the reaction dAMP(in) + ADP(out) + H(+)(out) = dAMP(out) + ADP(in) + H(+)(in). The catalysed reaction is 3'-AMP(in) + ADP(out) + H(+)(out) = 3'-AMP(out) + ADP(in) + H(+)(in). It carries out the reaction dAMP(out) + phosphate(in) = dAMP(in) + phosphate(out). The enzyme catalyses 3'-AMP(out) + phosphate(in) = 3'-AMP(in) + phosphate(out). It catalyses the reaction dADP(out) + phosphate(in) + H(+)(out) = dADP(in) + phosphate(out) + H(+)(in). Its activity is regulated as follows. Activated by an increase in cytosolic calcium levels that induce a conformational change of the N-terminal regulatory domain, uncapping the channel and allowing transport. Inhibited by bathophenanthroline, mersalyl, p-hydroxymercuribenzoate, bromcresol purple, tannic acid, pyridoxal 5'-phosphate and p-hydroxymercuribenzoate. Functionally, electroneutral antiporter that mediates the transport of adenine nucleotides through the inner mitochondrial membrane. Originally identified as an ATP-magnesium/inorganic phosphate antiporter, it also acts as a broad specificity adenyl nucleotide antiporter. By regulating the mitochondrial matrix adenine nucleotide pool could adapt to changing cellular energetic demands and indirectly regulate adenine nucleotide-dependent metabolic pathways. Also acts as a regulator of mitochondrial calcium uptake and can probably transport trace amounts of other divalent metal cations in complex with ATP. In vitro, a low activity is also observed with guanyl and pyrimidine nucleotides. In Homo sapiens (Human), this protein is Mitochondrial adenyl nucleotide antiporter SLC25A23.